We begin with the raw amino-acid sequence, 144 residues long: Flagellar assembly factor FliW (144 aa).

It belongs to the FliW family. As to quaternary structure, interacts with translational regulator CsrA and flagellin(s).

It localises to the cytoplasm. Its function is as follows. Acts as an anti-CsrA protein, binds CsrA and prevents it from repressing translation of its target genes, one of which is flagellin. Binds to flagellin and participates in the assembly of the flagellum. The protein is Flagellar assembly factor FliW of Geobacillus sp. (strain WCH70).